Consider the following 426-residue polypeptide: Enolase (426 aa).

(2R)-2-phosphoglycerate is bound at residue Gln-165. Glu-209 (proton donor) is an active-site residue. Mg(2+)-binding residues include Asp-244, Glu-287, and Asp-313. Positions 338, 367, 368, and 389 each coordinate (2R)-2-phosphoglycerate. Lys-338 serves as the catalytic Proton acceptor.

The protein belongs to the enolase family. It depends on Mg(2+) as a cofactor.

It is found in the cytoplasm. It localises to the secreted. The protein localises to the cell surface. It catalyses the reaction (2R)-2-phosphoglycerate = phosphoenolpyruvate + H2O. It functions in the pathway carbohydrate degradation; glycolysis; pyruvate from D-glyceraldehyde 3-phosphate: step 4/5. Its function is as follows. Catalyzes the reversible conversion of 2-phosphoglycerate (2-PG) into phosphoenolpyruvate (PEP). It is essential for the degradation of carbohydrates via glycolysis. The sequence is that of Enolase from Methanococcus maripaludis (strain C7 / ATCC BAA-1331).